A 349-amino-acid polypeptide reads, in one-letter code: Isopentenyl-diphosphate delta-isomerase (349 aa).

6–7 is a substrate binding site; it reads RK. FMN contacts are provided by residues 62 to 64, S93, and N122; that span reads AMT. Q152 serves as a coordination point for substrate. E153 serves as a coordination point for Mg(2+). Residues K184, T214, 258–259, and 280–281 each bind FMN; these read GG and AG.

It belongs to the IPP isomerase type 2 family. In terms of assembly, homooctamer. Dimer of tetramers. FMN is required as a cofactor. Requires NADPH as cofactor. The cofactor is Mg(2+).

It is found in the cytoplasm. The enzyme catalyses isopentenyl diphosphate = dimethylallyl diphosphate. Functionally, involved in the biosynthesis of isoprenoids. Catalyzes the 1,3-allylic rearrangement of the homoallylic substrate isopentenyl (IPP) to its allylic isomer, dimethylallyl diphosphate (DMAPP). This is Isopentenyl-diphosphate delta-isomerase from Bacillus cereus (strain ZK / E33L).